A 613-amino-acid polypeptide reads, in one-letter code: Leucine aminopeptidase 2 (613 aa).

Residues 134–136 and 265–270 contribute to the a peptide site; these read QAQ and PYGGME. Residue His294 coordinates Zn(2+). Glu295 acts as the Proton acceptor in catalysis. His298 and Glu317 together coordinate Zn(2+). Tyr382 acts as the Proton donor in catalysis.

Belongs to the peptidase M1 family. The cofactor is Zn(2+).

Its subcellular location is the cytoplasm. The protein localises to the nucleus. It carries out the reaction an epoxide + H2O = an ethanediol. Aminopeptidase that preferentially cleaves di- and tripeptides. Also has low epoxide hydrolase activity (in vitro). Can hydrolyze the epoxide leukotriene LTA(4) but it forms preferentially 5,6-dihydroxy-7,9,11,14-eicosatetraenoic acid rather than the cytokine leukotriene B(4) as the product compared to the homologous mammalian enzyme (in vitro). This chain is Leucine aminopeptidase 2, found in Pyricularia oryzae (strain 70-15 / ATCC MYA-4617 / FGSC 8958) (Rice blast fungus).